The sequence spans 120 residues: MMEGLSPASSLPLLLLLLSPAPEAALPLPSSTSCCTQLYRQPLPSRLLRRIVHMELQEADGDCHLQAVVLHLARRSVCVHPQNRSLARWLERQGKRLQGTVPSLNLVLQKKMYSHPQQQN.

Positions 1 to 25 (MMEGLSPASSLPLLLLLLSPAPEAA) are cleaved as a signal peptide. 2 disulfide bridges follow: Cys34–Cys63 and Cys35–Cys78.

It belongs to the intercrine beta (chemokine CC) family. Monomer, dimer, and tetramer. Heparin avidly promotes oligomerization. Interacts with TNFAIP6 (via Link domain). In terms of tissue distribution, isoform 1 is predominantly expressed in placenta and weakly in skin. Isoform 2 is predominantly expressed in testes and brain, weakly in kidney and liver and even lower in heart and muscle. Low expression of both isoforms in other tissues.

Its subcellular location is the secreted. It is found in the nucleus. In terms of biological role, chemotactic factor that attracts skin-associated memory T-lymphocytes. May play a role in mediating homing of lymphocytes to cutaneous sites. May play a role in cell migration during embryogenesis. Nuclear forms may facilitate cellular migration by inducing cytoskeletal relaxation. Binds to CCR10. This is C-C motif chemokine 27 (Ccl27) from Mus musculus (Mouse).